Reading from the N-terminus, the 434-residue chain is MPQFLDTRRPGFEADFTALLGMKREDSPDVDAVVAGIIADVRARGDAAVIELTARFDRLELTPERLAFSEAEIEAEIATVSAEDRAALELAAERIRAYHARQMPENARWTDAAGAELGWRWGPIASAGLYVPGGLASYPSSVLMNAIPARVAGVERLVVACPTPGGVVNPLVLLAARLAGVDAVYRIGGAQAVAALAYGTETIRPVDKITGPGNAYVAAAKRRVFGRVGIDMIAGPSEILVIAEGAVDPDWIALDLLSQAEHDESAQSILVTPDEALGRAVVQAVEARLETLERRAIAGASWRDYGAVIVTRDLEEAAALSDRVAPEHLELCVADPEALAARIRHAGAIFLGGWTPEAIGDYVGGPNHVLPTARSARFSSGLSVMDFLKRTTLARMTPAALRAVGPAAERLAISESLEAHGLSVRARLDRLNEG.

3 residues coordinate NAD(+): Y130, Q191, and N214. Substrate contacts are provided by S237, Q259, and H262. Q259 and H262 together coordinate Zn(2+). Active-site proton acceptor residues include E327 and H328. Substrate-binding residues include H328, D361, E415, and H420. D361 is a binding site for Zn(2+). H420 provides a ligand contact to Zn(2+).

This sequence belongs to the histidinol dehydrogenase family. Requires Zn(2+) as cofactor.

The enzyme catalyses L-histidinol + 2 NAD(+) + H2O = L-histidine + 2 NADH + 3 H(+). The protein operates within amino-acid biosynthesis; L-histidine biosynthesis; L-histidine from 5-phospho-alpha-D-ribose 1-diphosphate: step 9/9. In terms of biological role, catalyzes the sequential NAD-dependent oxidations of L-histidinol to L-histidinaldehyde and then to L-histidine. This is Histidinol dehydrogenase from Cereibacter sphaeroides (strain ATCC 17023 / DSM 158 / JCM 6121 / CCUG 31486 / LMG 2827 / NBRC 12203 / NCIMB 8253 / ATH 2.4.1.) (Rhodobacter sphaeroides).